Reading from the N-terminus, the 314-residue chain is Acetyl-coenzyme A carboxylase carboxyl transferase subunit alpha (314 aa).

The 258-residue stretch at E32–S289 folds into the CoA carboxyltransferase C-terminal domain.

It belongs to the AccA family. Acetyl-CoA carboxylase is a heterohexamer composed of biotin carboxyl carrier protein (AccB), biotin carboxylase (AccC) and two subunits each of ACCase subunit alpha (AccA) and ACCase subunit beta (AccD).

The protein localises to the cytoplasm. The catalysed reaction is N(6)-carboxybiotinyl-L-lysyl-[protein] + acetyl-CoA = N(6)-biotinyl-L-lysyl-[protein] + malonyl-CoA. The protein operates within lipid metabolism; malonyl-CoA biosynthesis; malonyl-CoA from acetyl-CoA: step 1/1. Component of the acetyl coenzyme A carboxylase (ACC) complex. First, biotin carboxylase catalyzes the carboxylation of biotin on its carrier protein (BCCP) and then the CO(2) group is transferred by the carboxyltransferase to acetyl-CoA to form malonyl-CoA. This Staphylococcus aureus (strain JH9) protein is Acetyl-coenzyme A carboxylase carboxyl transferase subunit alpha.